Reading from the N-terminus, the 238-residue chain is Aerobic respiration control protein ArcA (238 aa).

The 114-residue stretch at His5–Leu118 folds into the Response regulatory domain. 4-aspartylphosphate is present on Asp54. The segment at residues Val134 to Gly234 is a DNA-binding region (ompR/PhoB-type).

In terms of processing, phosphorylated by ArcB.

Its subcellular location is the cytoplasm. Member of the two-component regulatory system ArcB/ArcA. Represses a wide variety of aerobic enzymes under anaerobic conditions. It may also be involved in the osmoregulation of envelope proteins. When activated by ArcB, it negatively regulates the expression of genes of aerobic function. Activates the transcription of the plfB operon by binding to its promoter. The sequence is that of Aerobic respiration control protein ArcA (arcA) from Escherichia coli O157:H7.